The chain runs to 169 residues: 6,7-dimethyl-8-ribityllumazine synthase (169 aa).

Residues Trp27, 61–63, and 90–92 each bind 5-amino-6-(D-ribitylamino)uracil; these read SYE and VLI. 95 to 96 lines the (2S)-2-hydroxy-3-oxobutyl phosphate pocket; that stretch reads ST. His98 serves as the catalytic Proton donor. Phe123 contacts 5-amino-6-(D-ribitylamino)uracil. Arg137 lines the (2S)-2-hydroxy-3-oxobutyl phosphate pocket.

It belongs to the DMRL synthase family. Homopentamer.

The protein localises to the mitochondrion intermembrane space. It carries out the reaction (2S)-2-hydroxy-3-oxobutyl phosphate + 5-amino-6-(D-ribitylamino)uracil = 6,7-dimethyl-8-(1-D-ribityl)lumazine + phosphate + 2 H2O + H(+). Its pathway is cofactor biosynthesis; riboflavin biosynthesis; riboflavin from 2-hydroxy-3-oxobutyl phosphate and 5-amino-6-(D-ribitylamino)uracil: step 1/2. In terms of biological role, catalyzes the formation of 6,7-dimethyl-8-ribityllumazine by condensation of 5-amino-6-(D-ribitylamino)uracil with 3,4-dihydroxy-2-butanone 4-phosphate. This is the penultimate step in the biosynthesis of riboflavin. The chain is 6,7-dimethyl-8-ribityllumazine synthase (RIB4) from Saccharomyces cerevisiae (strain ATCC 204508 / S288c) (Baker's yeast).